Here is a 278-residue protein sequence, read N- to C-terminus: Membrane protein insertase YidC 2 (278 aa).

The signal sequence occupies residues 1-18; it reads MHKRLFITLLGFIILLAG. Cys-19 carries N-palmitoyl cysteine lipidation. The S-diacylglycerol cysteine moiety is linked to residue Cys-19. The next 4 helical transmembrane spans lie at 55-75, 132-152, 176-196, and 224-244; these read GFAI…FMLI, MLGC…YMSL, LIMT…NSIH, and AAAL…QMHF.

This sequence belongs to the OXA1/ALB3/YidC family. Type 2 subfamily.

The protein localises to the cell membrane. Required for the insertion and/or proper folding and/or complex formation of integral membrane proteins into the membrane. Involved in integration of membrane proteins that insert both dependently and independently of the Sec translocase complex, as well as at least some lipoproteins. The protein is Membrane protein insertase YidC 2 of Staphylococcus epidermidis (strain ATCC 12228 / FDA PCI 1200).